A 2220-amino-acid polypeptide reads, in one-letter code: Calcineurin-binding protein cabin-1 (2220 aa).

Phosphoserine occurs at positions 10 and 11. Thr-12 carries the post-translational modification Phosphothreonine. Phosphoserine occurs at positions 20 and 66. TPR repeat units follow at residues 36–69, 90–123, and 125–157; these read AFAL…SLLR, YSTY…DSTD, and NLWY…NPDH. A disordered region spans residues 361–400; sequence GAPVGDISGGDKSKKGVKRKKISEESGETAKRRSARVRNT. Residues 382 to 391 are compositionally biased toward basic and acidic residues; the sequence is ISEESGETAK. Phosphoserine occurs at positions 433 and 450. One copy of the TPR 4 repeat lies at 615–648; the sequence is VRVYWLKARFLALQGDMEQALENYDICTEMLQSS. At Ser-673 the chain carries Phosphoserine. 2 TPR repeats span residues 1055-1088 and 1106-1139; these read NELY…CPNR and KLNS…DSSN. 4 disordered regions span residues 1299–1476, 1668–1845, 1916–2165, and 2197–2220; these read FARG…STPT, AEGS…RLSR, AQRQ…GSIS, and VLET…YMDI. The span at 1301–1324 shows a compositional bias: basic and acidic residues; sequence RGEEKNTPKASEKEKACLVDEDSH. The span at 1327–1349 shows a compositional bias: low complexity; the sequence is AGTLPGPGASLPSSSGPGLTSPP. Residues 1377–1397 are compositionally biased toward polar residues; sequence DSTAVALSDSSSTQDFFNEPT. Over residues 1402–1412 the composition is skewed to basic and acidic residues; that stretch reads GSRKSYTEKRL. Ser-1439 carries the phosphoserine modification. The segment covering 1715–1725 has biased composition (gly residues); that stretch reads SGPGPEPGGKV. Basic and acidic residues-rich tracts occupy residues 1744-1753 and 1784-1794; these read SGERKDKESP and PARDRGPESRP. Over residues 1812–1823 the composition is skewed to pro residues; the sequence is PLTPAQPAPAPA. 2 stretches are compositionally biased toward polar residues: residues 1918-1927 and 1975-1989; these read RQASGDTPTT and TIIT…STLD. Thr-1924 carries the post-translational modification Phosphothreonine. Basic and acidic residues predominate over residues 2070 to 2081; the sequence is GKLRPEPRRDGE. Low complexity predominate over residues 2091-2112; sequence PLSSPPTAASSKAPSSGSAQPP. Phosphoserine is present on Ser-2094. Residues 2116–2153 form a required for interaction with calcineurin region; that stretch reads PGKPEPSRAKSRPLPNMPKLVIPSAATKFPPEITVTPP. Phosphothreonine is present on residues Thr-2151 and Thr-2154. Positions 2207-2220 are enriched in acidic residues; it reads LESETDEDDDYMDI.

As to quaternary structure, component of a complex that includes at least ASF1A, CABIN1, HIRA, histone H3.3 and UBN1. Interacts with calcineurin. Interacts with MEF2B. Activated through PKC-mediated hyperphosphorylation. Phosphorylation by the DNA damage kinases ATM and CHK2 enhances ubiquitination. In terms of processing, upon genotoxic stress, ubiquitination by the DCX(DDB2) E3 ubiquitin-protein ligase complex targets CABIN1 for proteasomal degradation, leading to the release of p53/TP53. In terms of tissue distribution, widely expressed in different tissues.

The protein localises to the nucleus. Functionally, may be required for replication-independent chromatin assembly. May serve as a negative regulator of T-cell receptor (TCR) signaling via inhibition of calcineurin. Inhibition of activated calcineurin is dependent on both PKC and calcium signals. Acts as a negative regulator of p53/TP53 by keeping p53 in an inactive state on chromatin at promoters of a subset of it's target genes. This is Calcineurin-binding protein cabin-1 (CABIN1) from Homo sapiens (Human).